A 799-amino-acid chain; its full sequence is MLRGQRLGQLGWHRPAAGLGSLMTSLMLACASAASCREVCCPVGPSGLRCTRAGSLDTLRGLRGAGNLTELYVENQQHLQRLEFEDLQGLGELRSLTIVKSGLRFVAPDAFRFTPRLSHLNLSSNALESLSWKTVQGLSLQDLTLSGNPLHCSCALFWLQRWEQEGLCGVHTQTLHDSGPGDQFLPLGHNTSCGVPTVKIQMPNDSVEVGDDVFLQCQVEGLALQQADWILTELEGAATVKKFGDLPSLGLILVNVTSDLNKKNVTCWAENDVGRAEVSVQVSVSFPASVHLGLAVEQHHWCIPFSVDGQPAPSLRWLFNGSVLNETSFIFTQFLESALTNETMRHGCLRLNQPTHVNNGNYTLLAANPYGQAAASVMAAFMDNPFEFNPEDPIPVSFSPVDGNSTSRDPVEKKDETPFGVSVAVGLAVSAALFLSALLLVLNKCGQRSKFGINRPAVLAPEDGLAMSLHFMTLGGSSLSPTEGKGSGLQGHIMENPQYFSDTCVHHIKRQDIILKWELGEGAFGKVFLAECYNLLNDQDKMLVAVKALKEASENARQDFQREAELLTMLQHQHIVRFFGVCTEGGPLLMVFEYMRHGDLNRFLRSHGPDAKLLAGGEDVAPGPLGLGQLLAVASQVAAGMVYLASLHFVHRDLATRNCLVGQGLVVKIGDFGMSRDIYSTDYYRVGGRTMLPIRWMPPESILYRKFSTESDVWSFGVVLWEIFTYGKQPWYQLSNTEAIECITQGRELERPRACPPDVYAIMRGCWQREPQQRLSMKDVHARLQALAQAPPSYLDVLG.

Positions methionine 1–alanine 33 are cleaved as a signal peptide. The Extracellular segment spans residues alanine 34–glycine 420. Disulfide bonds link cysteine 36–cysteine 41 and cysteine 40–cysteine 50. Residue asparagine 67 is glycosylated (N-linked (GlcNAc...) asparagine). LRR repeat units lie at residues leucine 90 to phenylalanine 113 and arginine 116 to glycine 137. N-linked (GlcNAc...) asparagine glycosylation is found at asparagine 121, asparagine 190, asparagine 204, asparagine 255, asparagine 264, asparagine 320, asparagine 325, asparagine 341, asparagine 361, and asparagine 404. The region spanning asparagine 148–valine 219 is the LRRCT domain. Cysteine 154 and cysteine 193 form a disulfide bridge. 2 consecutive Ig-like C2-type domains span residues proline 196–serine 285 and aspartate 205–asparagine 368. 2 cysteine pairs are disulfide-bonded: cysteine 217-cysteine 267 and cysteine 302-cysteine 348. A helical membrane pass occupies residues valine 421 to valine 441. Topologically, residues leucine 442–glycine 799 are cytoplasmic. Positions methionine 472–isoleucine 493 are interaction with SQSTM1. Position 499 is a phosphotyrosine; by autocatalysis (tyrosine 499). A Protein kinase domain is found at isoleucine 513–leucine 784. Residues leucine 519–valine 527 and lysine 547 contribute to the ATP site. Aspartate 653 (proton acceptor) is an active-site residue. 4 positions are modified to phosphotyrosine; by autocatalysis: tyrosine 679, tyrosine 683, tyrosine 684, and tyrosine 794.

Belongs to the protein kinase superfamily. Tyr protein kinase family. Insulin receptor subfamily. Exists in a dynamic equilibrium between monomeric (low affinity) and dimeric (high affinity) structures. Homodimerization is induced by binding of a NGF dimer. Found in a complex, at least composed of KIDINS220, MAGI2, NTRK1 and RAPGEF2; the complex is mainly formed at late endosomes in a nerve growth factor (NGF)-dependent manner. Interacts with RAPGEF2; the interaction is strengthened after NGF stimulation. Interacts with SQSTM1; bridges NTRK1 to NGFR. Forms a ternary complex with NGFR and KIDINS220; this complex is affected by the expression levels of KIDINS220 and an increase in KIDINS220 expression leads to a decreased association of NGFR and NTRK1. Interacts (phosphorylated upon activation by NGF) with SHC1; mediates SHC1 phosphorylation and activation. Interacts (phosphorylated upon activation by NGF) with PLCG1; mediates PLCG1 phosphorylation and activation. Interacts (phosphorylated) with SH2B1 and SH2B2. Interacts with GRB2. Interacts with PIK3R1. Interacts with FRS2. Interacts with SORT1; may regulate NTRK1 anterograde axonal transport. Interacts with SH2D1A; regulates NTRK1. Interacts with NRADD. Interacts with RAB7A. Interacts with PTPRS. Interacts with USP36; USP36 does not deubiquitinate NTRK1. Interacts with GGA3. Interacts with TSPAN1; this interaction promotes NTRK1 stability. Post-translationally, ligand-mediated autophosphorylation. Interaction with SQSTM1 is phosphotyrosine-dependent. Autophosphorylation at Tyr-499 mediates interaction and phosphorylation of SHC1. N-glycosylated. In terms of processing, ubiquitinated. Undergoes polyubiquitination upon activation; regulated by NGFR. Ubiquitination by NEDD4L leads to degradation. Ubiquitination regulates the internalization of the receptor.

It localises to the cell membrane. Its subcellular location is the early endosome membrane. The protein localises to the late endosome membrane. The protein resides in the recycling endosome membrane. The catalysed reaction is L-tyrosyl-[protein] + ATP = O-phospho-L-tyrosyl-[protein] + ADP + H(+). With respect to regulation, the pro-survival signaling effect of NTRK1 in neurons requires its endocytosis into signaling early endosomes and its retrograde axonal transport. This is regulated by different proteins including CFL1, RAC1 and SORT1. NTF3 is unable to induce this signaling probably due to the lability of the NTF3-NTRK1 complex in endosomes. SH2D1A inhibits the autophosphorylation of the receptor, and alters the recruitment and activation of downstream effectors and signaling cascades. Regulated by NGFR. In terms of biological role, receptor tyrosine kinase involved in the development and the maturation of the central and peripheral nervous systems through regulation of proliferation, differentiation and survival of sympathetic and nervous neurons. High affinity receptor for NGF which is its primary ligand, it can also bind and be activated by NTF3/neurotrophin-3. However, NTF3 only supports axonal extension through NTRK1 but has no effect on neuron survival. Upon dimeric NGF ligand-binding, undergoes homodimerization, autophosphorylation and activation. Recruits, phosphorylates and/or activates several downstream effectors including SHC1, FRS2, SH2B1, SH2B2 and PLCG1 that regulate distinct overlapping signaling cascades driving cell survival and differentiation. Through SHC1 and FRS2 activates a GRB2-Ras-MAPK cascade that regulates cell differentiation and survival. Through PLCG1 controls NF-Kappa-B activation and the transcription of genes involved in cell survival. Through SHC1 and SH2B1 controls a Ras-PI3 kinase-AKT1 signaling cascade that is also regulating survival. In absence of ligand and activation, may promote cell death, making the survival of neurons dependent on trophic factors. This is High affinity nerve growth factor receptor (Ntrk1) from Mus musculus (Mouse).